Consider the following 357-residue polypeptide: 3-dehydroquinate synthase (357 aa).

NAD(+) contacts are provided by residues 104–108 (GVVGD), 128–129 (TT), Lys141, and 168–171 (FLET). The Zn(2+) site is built by Glu183, His243, and His260.

This sequence belongs to the sugar phosphate cyclases superfamily. Dehydroquinate synthase family. Co(2+) is required as a cofactor. The cofactor is Zn(2+). Requires NAD(+) as cofactor.

The protein resides in the cytoplasm. The enzyme catalyses 7-phospho-2-dehydro-3-deoxy-D-arabino-heptonate = 3-dehydroquinate + phosphate. The protein operates within metabolic intermediate biosynthesis; chorismate biosynthesis; chorismate from D-erythrose 4-phosphate and phosphoenolpyruvate: step 2/7. Its function is as follows. Catalyzes the conversion of 3-deoxy-D-arabino-heptulosonate 7-phosphate (DAHP) to dehydroquinate (DHQ). The polypeptide is 3-dehydroquinate synthase (Streptococcus pyogenes serotype M49 (strain NZ131)).